Reading from the N-terminus, the 380-residue chain is Cytochrome b (380 aa).

Transmembrane regions (helical) follow at residues 34–54 (FGSLLGLCLVTQILTGLLLAT), 78–99 (WLIRNLHANGASFFFICIYLHI), 114–134 (WNTGILLLLTLMATAFVGYVL), and 179–199 (FFALHFLLPFMIAGLTLIHLT). Positions 84 and 98 each coordinate heme b. Positions 183 and 197 each coordinate heme b. A ubiquinone is bound at residue H202. A run of 4 helical transmembrane segments spans residues 227–247 (LKDTLGFMFMLFLLTTLALFS), 289–309 (LGGVLALAASVLILFLSPLLH), 321–341 (FSQFLFWLLIANLLILTWVGS), and 348–368 (FIIIGQLASLTYFTILLILLP).

It belongs to the cytochrome b family. The cytochrome bc1 complex contains 11 subunits: 3 respiratory subunits (MT-CYB, CYC1 and UQCRFS1), 2 core proteins (UQCRC1 and UQCRC2) and 6 low-molecular weight proteins (UQCRH/QCR6, UQCRB/QCR7, UQCRQ/QCR8, UQCR10/QCR9, UQCR11/QCR10 and a cleavage product of UQCRFS1). This cytochrome bc1 complex then forms a dimer. The cofactor is heme b.

The protein resides in the mitochondrion inner membrane. Its function is as follows. Component of the ubiquinol-cytochrome c reductase complex (complex III or cytochrome b-c1 complex) that is part of the mitochondrial respiratory chain. The b-c1 complex mediates electron transfer from ubiquinol to cytochrome c. Contributes to the generation of a proton gradient across the mitochondrial membrane that is then used for ATP synthesis. This is Cytochrome b (MT-CYB) from Garrodia nereis (Grey-backed storm-petrel).